The following is a 56-amino-acid chain: MIYYSNYYGGYGYGGLGCGYGCGYRGYGCGYGGYGGYGNGYYCPSCYGRYWSYGFY.

Belongs to the KRTAP type 20 family. In terms of assembly, interacts with hair keratins.

In the hair cortex, hair keratin intermediate filaments are embedded in an interfilamentous matrix, consisting of hair keratin-associated proteins (KRTAP), which are essential for the formation of a rigid and resistant hair shaft through their extensive disulfide bond cross-linking with abundant cysteine residues of hair keratins. The matrix proteins include the high-sulfur and high-glycine-tyrosine keratins. The polypeptide is Keratin-associated protein 20-1 (KRTAP20-1) (Homo sapiens (Human)).